Here is a 302-residue protein sequence, read N- to C-terminus: Glycine--tRNA ligase alpha subunit (302 aa).

This sequence belongs to the class-II aminoacyl-tRNA synthetase family. In terms of assembly, tetramer of two alpha and two beta subunits.

It localises to the cytoplasm. It catalyses the reaction tRNA(Gly) + glycine + ATP = glycyl-tRNA(Gly) + AMP + diphosphate. This is Glycine--tRNA ligase alpha subunit from Haemophilus influenzae (strain 86-028NP).